The chain runs to 21 residues: MVKQIEFKYAFQEALNSAGDK.

K3 is modified (N6-acetyllysine). An N6-succinyllysine modification is found at K8.

This sequence belongs to the thioredoxin family. As to quaternary structure, homodimer; disulfide-linked. Interacts with TXNIP through the redox-active site. Interacts with MAP3K5 and CASP3. Interacts with APEX1; the interaction stimulates the FOS/JUN AP-1 DNA-binding activity in a redox-dependent manner.

The protein resides in the nucleus. It localises to the cytoplasm. The protein localises to the secreted. Its function is as follows. Participates in various redox reactions through the reversible oxidation of its active center dithiol to a disulfide and catalyzes dithiol-disulfide exchange reactions. Plays a role in the reversible S-nitrosylation of cysteine residues in target proteins, and thereby contributes to the response to intracellular nitric oxide. Nitrosylates the active site Cys of CASP3 in response to nitric oxide (NO), and thereby inhibits caspase-3 activity. Induces the FOS/JUN AP-1 DNA binding activity in ionizing radiation (IR) cells through its oxidation/reduction status and stimulates AP-1 transcriptional activity. The sequence is that of Thioredoxin (TXN) from Canis lupus familiaris (Dog).